The sequence spans 671 residues: Phosphoenolpyruvate carboxykinase (ATP) 1 (671 aa).

The span at 1–10 shows a compositional bias: low complexity; sequence MSAGNGNATN. Positions 1-44 are disordered; the sequence is MSAGNGNATNGDGGFSFPKGPVMPKITTGAAKRGSGVCHDDSGP. At Ser-2 the chain carries N-acetylserine. The residue at position 62 (Ser-62) is a Phosphoserine. Thr-66 carries the post-translational modification Phosphothreonine. The tract at residues 100 to 127 is disordered; it reads TRESGPKVVRGDPAEKKTDGSTTPAYAH. Residues 108–118 show a composition bias toward basic and acidic residues; that stretch reads VRGDPAEKKTD. Arg-189 lines the substrate pocket. Ca(2+) is bound by residues His-270 and Asn-271. 2 residues coordinate substrate: Tyr-328 and Lys-334. Residues Lys-334, His-353, and 369–377 each bind ATP; that span reads GLSGTGKTT. Residues Lys-334 and His-353 each contribute to the Mn(2+) site. Asp-390 provides a ligand contact to Mn(2+). Gly-404 contacts Ca(2+). ATP-binding positions include Glu-418, Arg-455, 574–575, Ile-575, and Thr-580; that span reads RI. Arg-455 is a binding site for substrate.

This sequence belongs to the phosphoenolpyruvate carboxykinase (ATP) family. Monomer. Mn(2+) is required as a cofactor. In terms of tissue distribution, expressed in cotyledons, flowers, siliques, seeds, leaves, stems and roots. Localized in mid-veins.

It localises to the cytoplasm. It catalyses the reaction oxaloacetate + ATP = phosphoenolpyruvate + ADP + CO2. It functions in the pathway carbohydrate biosynthesis; gluconeogenesis. Allosterically activated by calcium. It may represent the only case of a monomeric, allosteric enzyme. In terms of biological role, involved in the gluconeogenesis. Catalyzes the conversion of oxaloacetate (OAA) to phosphoenolpyruvate (PEP) through direct phosphoryl transfer between the nucleoside triphosphate and OAA. The polypeptide is Phosphoenolpyruvate carboxykinase (ATP) 1 (Arabidopsis thaliana (Mouse-ear cress)).